A 381-amino-acid chain; its full sequence is Alcohol dehydrogenase class-3 (381 aa).

Residue Cys49 coordinates Zn(2+). NAD(+) is bound at residue His50. An alcohol-binding residues include Thr51 and His71. The Zn(2+) site is built by His71, Glu72, Cys101, Cys104, Cys107, Cys115, and Cys179. Residues 204–209, Asp228, Lys233, Ile274, 297–299, 322–324, and Arg374 each bind NAD(+); these read GLGTVG, VGV, and TAF.

Belongs to the zinc-containing alcohol dehydrogenase family. Class-III subfamily. In terms of assembly, homodimer. Zn(2+) is required as a cofactor. Expressed at low levels in the leaves.

The protein localises to the cytoplasm. The enzyme catalyses a primary alcohol + NAD(+) = an aldehyde + NADH + H(+). The catalysed reaction is a secondary alcohol + NAD(+) = a ketone + NADH + H(+). It catalyses the reaction S-(hydroxymethyl)glutathione + NADP(+) = S-formylglutathione + NADPH + H(+). It carries out the reaction S-(hydroxymethyl)glutathione + NAD(+) = S-formylglutathione + NADH + H(+). This is Alcohol dehydrogenase class-3 (FDH) from Zea mays (Maize).